Here is a 119-residue protein sequence, read N- to C-terminus: Large ribosomal subunit protein bL17 (119 aa).

It belongs to the bacterial ribosomal protein bL17 family. Part of the 50S ribosomal subunit. Contacts protein L32.

This Psychrobacter sp. (strain PRwf-1) protein is Large ribosomal subunit protein bL17.